A 2671-amino-acid chain; its full sequence is Inositol 1,4,5-trisphosphate-gated calcium channel ITPR3 (2671 aa).

The Cytoplasmic segment spans residues 1 to 2202 (MSEMSSFLHI…LIYWFSRRMT (2202 aa)). 5 consecutive MIR domains span residues 113 to 173 (GDVV…LRSN), 174 to 224 (GDNV…INLF), 232 to 288 (EEVL…VEVV), 295 to 372 (GGAG…LDPT), and 378 to 434 (DSFV…IVSV). Residues R266, T268, L269, and R270 each contribute to the 1D-myo-inositol 1,4,5-trisphosphate site. Residues 322 to 342 (SYKGDASDPKAAGMGAQGRTG) are disordered. 6 residues coordinate 1D-myo-inositol 1,4,5-trisphosphate: R503, K507, R510, Y567, R568, and K569. Residue R743 coordinates Ca(2+). Residues S916 and S934 each carry the phosphoserine modification. Ca(2+)-binding residues include E1122 and E1125. 2 disordered regions span residues 1132–1163 (GSGK…PPGE) and 1809–1848 (NDLG…GPSL). A phosphoserine mark is found at S1813, S1832, and S1834. The Ca(2+) site is built by E1882 and E1946. 3 residues coordinate ATP: A1996, E2149, and K2152. A helical membrane pass occupies residues 2203–2223 (LWGSISFNLAVFINIIIAFFY). Topologically, residues 2224 to 2235 (PYMEGASTGVLD) are extracellular. Residues 2236–2256 (SPLISLLFWILICFSIAALFT) form a helical membrane-spanning segment. At 2257–2264 (KRYSIRPL) the chain is on the cytoplasmic side. A helical membrane pass occupies residues 2265 to 2285 (IVALILRSIYYLGIGPTLNIL). Residues 2286–2325 (GALNLTNKIVFVVSFVGNRGTFIRGYKAMVMDMEFLYHVG) lie on the Extracellular side of the membrane. A helical transmembrane segment spans residues 2326 to 2346 (YILTSVLGLFAHELFYSILLF). At 2347–2368 (DLIYREETLFNVIKSVTRNGRS) the chain is on the cytoplasmic side. Residues 2369 to 2389 (ILLTALLALILVYLFSIVGFL) form a helical membrane-spanning segment. The Extracellular portion of the chain corresponds to 2390–2496 (FLKDDFILEV…ESLFPARVVY (107 aa)). C2455 and C2461 form a disulfide bridge. A helical transmembrane segment spans residues 2497 to 2517 (DLLFFFIVIIIVLNLIFGVII). Over 2518–2671 (DTFADLRSEK…FVDVQNCISR (154 aa)) the chain is Cytoplasmic. Residues C2538 and F2539 each coordinate ATP. Zn(2+) is bound at residue C2538. Zn(2+)-binding residues include C2541 and H2558. ATP is bound by residues K2560, H2563, N2564, and M2565. Residue H2563 coordinates Zn(2+). T2581 contacts Ca(2+). Residues S2609 and S2670 each carry the phosphoserine modification.

It belongs to the InsP3 receptor family. Homotetramer. Homodimer. Interacts with TRPC1, TRPC3 and TRPC4. Interacts with TRPV4. Interacts with SIGMAR1. Interacts with PML and AKT1. Interacts with IRAG2 (via coiled-coil domain). Interacts with CABP1. Interacts with TMBIM4/LFG4. Interacts with CEMIP. Interacts with TESPA1. Interacts with TMEM203. Interacts with BOK; regulates ITPR3 expression. Interacts with BCL2L10. Interacts with CHGA and CHGB. Post-translationally, phosphorylated by AKT1 on serine and/or threonine residues. As to expression, expressed in intestinal crypt and villus epithelial cells.

Its subcellular location is the endoplasmic reticulum membrane. It is found in the cytoplasmic vesicle. It localises to the secretory vesicle membrane. It catalyses the reaction Ca(2+)(in) = Ca(2+)(out). Inositol 1,4,5-trisphosphate-gated calcium channel is regulated by cytosolic calcium in a biphasic manner. At low concentrations, cytosolic calcium binds at a high-affinity juxtamembrane domain (JD) calcium binding site, allowing ITPR3 to activate by escaping a low-energy resting state through an ensemble of preactivated states. At high cytosolic calcium concentrations, ITPR3 preferentially enters an inhibited state stabilized by calcium binding at a second, low-affinity cytoplasmic domain (CD) calcium binding site. Functionally, inositol 1,4,5-trisphosphate-gated calcium channel that, upon 1D-myo-inositol 1,4,5-trisphosphate binding, transports calcium from the endoplasmic reticulum lumen to cytoplasm, thus releasing the intracellular calcium and therefore participates in cellular calcium ion homeostasis. 1D-myo-inositol 1,4,5-trisphosphate binds to the ligand-free channel without altering its global conformation, yielding the low-energy resting state, then progresses through resting-to preactivated transitions to the higher energy preactivated state, which increases affinity for calcium, promoting binding of the low basal cytosolic calcium at the juxtamembrane domain (JD) site, favoring the transition through the ensemble of high-energy intermediate states along the trajectory to the fully-open activated state. Upon opening, releases calcium in the cytosol where it can bind to the low-affinity cytoplasmic domain (CD) site and stabilizes the inhibited state to terminate calcium release. The chain is Inositol 1,4,5-trisphosphate-gated calcium channel ITPR3 from Homo sapiens (Human).